A 270-amino-acid polypeptide reads, in one-letter code: Ribosomal RNA small subunit methyltransferase A (270 aa).

S-adenosyl-L-methionine is bound by residues Asn18, Leu20, Gly45, Glu66, Asp91, and Asn112.

This sequence belongs to the class I-like SAM-binding methyltransferase superfamily. rRNA adenine N(6)-methyltransferase family. RsmA subfamily.

It localises to the cytoplasm. The catalysed reaction is adenosine(1518)/adenosine(1519) in 16S rRNA + 4 S-adenosyl-L-methionine = N(6)-dimethyladenosine(1518)/N(6)-dimethyladenosine(1519) in 16S rRNA + 4 S-adenosyl-L-homocysteine + 4 H(+). In terms of biological role, specifically dimethylates two adjacent adenosines (A1518 and A1519) in the loop of a conserved hairpin near the 3'-end of 16S rRNA in the 30S particle. May play a critical role in biogenesis of 30S subunits. In Psychromonas ingrahamii (strain DSM 17664 / CCUG 51855 / 37), this protein is Ribosomal RNA small subunit methyltransferase A.